Consider the following 100-residue polypeptide: Small ribosomal subunit protein uS14c (100 aa).

The protein belongs to the universal ribosomal protein uS14 family. As to quaternary structure, part of the 30S ribosomal subunit.

It localises to the plastid. The protein resides in the chloroplast. In terms of biological role, binds 16S rRNA, required for the assembly of 30S particles. This is Small ribosomal subunit protein uS14c from Lepidium virginicum (Virginia pepperweed).